Here is a 194-residue protein sequence, read N- to C-terminus: Ion-translocating oxidoreductase complex subunit B (194 aa).

Residues 1–26 (MSSILIAVIAIAALALVFGLILGFAS) are hydrophobic. Residues 32 to 90 (ESDPIVEQIDAILPQTQCGQCGYPGCKPYAEAIANGDMINKCPPGGQATIEKLADLMGV) enclose the 4Fe-4S domain. [4Fe-4S] cluster is bound by residues cysteine 49, cysteine 52, cysteine 57, cysteine 73, cysteine 114, cysteine 117, cysteine 120, cysteine 124, cysteine 144, cysteine 147, cysteine 150, and cysteine 154. 2 4Fe-4S ferredoxin-type domains span residues 105-134 (KVAF…GGTK) and 135-164 (ALHT…MIPV).

It belongs to the 4Fe4S bacterial-type ferredoxin family. RnfB subfamily. As to quaternary structure, the complex is composed of six subunits: RnfA, RnfB, RnfC, RnfD, RnfE and RnfG. Requires [4Fe-4S] cluster as cofactor.

It is found in the cell inner membrane. In terms of biological role, part of a membrane-bound complex that couples electron transfer with translocation of ions across the membrane. The protein is Ion-translocating oxidoreductase complex subunit B of Aliivibrio fischeri (strain ATCC 700601 / ES114) (Vibrio fischeri).